A 3483-amino-acid polypeptide reads, in one-letter code: MRTDLPQTMQRATAVPVVFPNLTGRAVPPPRGSRTSQKCLVTYSIPLSTLGERCDALGVSVGYLSQSIWARLLSQYTGEPEVSFGAFLSESPIPEEERGSCLCKLWRKSAYSVEVAFSPGKTDDDVRRELENGPRGNRKDVYESVISVYSAESENPYLARAAADSEFIVHLEIMLNKRTDQVRLAVHYDPAFVTGDSALIIAREFLGILTFESLGSGRTTRYSNLQPEILSMCQPSGNAPVDISDRNLFVHHLFEKHAAETPENSCLEFLHDETDQVESWTFKKLNETSNRIAHLILQNGVARDEAVPVCLDKGPLYYACILACMKAGVPFTPIDPVAPVARKTFMIEELQARYVLSIPDRFDELGLDENVKILDLSNEESLGKLSPQNPQVPDLTERSLAYRLYTSGSTGQPKAVSLEVGAVVHAIQKSIALLPLRRDSRLLQFAAITFDMCYFDCFLAWTVGFTMVSASKRYLLGELEATVKRLQISFLDLTPSVAATLTASELPEVEMLYCIGEAMPTKIVEDWAGRCVNSYGPTEAAMLCTIVNVDKDIRAANFGQPFNGMSLYILDKDMPVILPRMAAGELCICGPQLAREYHRNEAKTASSFITLDSGLRLYRTGDLARMLADGTFEFIGRKDDQVKLRGFRIELGEVSAVLRDVHPLIKDVVALVLKHSDEQKEQLVTFLSFASRKNRLDPPSIQDCDPADWEDIERAARKVAEAALPQYMLPHIYFPINWIPLSAAAKVDKRSLGELFRRTDISTLGRRAEAGASDEVFDELSTKIRHVFAEASSSELETIGMDTTIYQLGLDSISALNVARSLKAIGVNASVLDIIECPTIRGLRDHVSGKKNPISASYHQDIFASFKQQHIDAVCSSTSVPREKVANVLPCSPMQEGILTQFLQSKGSLYYNAILFRLENGVNIECLEDSWIQVAEQNDVLRTGFVEHEVDGGHYAMITYKSASTSLVRKVQTQIPVEEFVKQVQKEEAQKALSNIALPPWSVTLVPGENASHMIFTALHAIYDAQTLQILLNDVNLFYHKTQPVLHSSPSSILKEMLKISRDKEAVASAAKYWKSVLQDCPITKFPVMTPLREDTGEFVYSYKKCDTTMKQVEDMCKKVGFSFGAVGQAVWAKLLAMYFGERDICFGTVVSGRTGSDNAEDVVFPCLTTIPMRVQLDGDNKALVAQIQGRLSKTLKFQHTPLRAIQKALGHPEQGLFDTIFVYQKSSNSNERLRPVWRELDAKATVEYPVSFEIEPTDDGHLGLRLTGRTDILPQEQMEIMVAQYEYCLLHMLQNQAVDAMDLGDVPQPILSDTPAEFDKLTCDVKFLHEFVSASTKRHPSKLALEFATEIQGNNVTKDSWTYRQFDDMGNKIANFLLQHGAATGDLIGICFDKTPQAYFGILGILKAGCAFVALDFSAPVQRRSFIVQDAKIRIVLTMAQFAKDFDGISGLNVYSLDSLQTLTRYFSTEEPEIIDLTPDHLSYVLYTSGTTGTPKGCRITHDNAVQAMLSFQTLFKGHWDENSRFLQFASLHFDVSVLEQYWSWSVGVCLTGAPRDLIFQDLGNAIRALQITHIDLTPSLARLITPEDCPTLCRGVFITGGEKLKQDVLDAWGEENVIYNGYGPTEATIGVTMYPRVPRNGRPSNIGPQFVNVGSMVLKPKTMIPVLQGAVGELCVTGALVGDGYLNRQDLTEEKFPWVNGKRMYRTGDLVRQLHNGCFDYLGRADDQVKLRGQRLELGEINETIRSADKDVAEIVTLVCQHGQQQVQQLVSFVSFKSNTDGRGSPAPTQLLHSFPDAETGSRILQACQSRLPVYMVPTYILPITKLPLTVNNKVDERTLRNLFANTSMEVIQSFEEMSSGDEELSETEKVIRDTLGEVSIDTNSVSKNVSFFQLGLDSVSIVGFSNRLRRKGFQNIEVSLVMQNSTIASLAKALSSANGLAAGENIQNALQSIKAFNIEHGFEVCSSLGLNEEDIESIKPCTPLQEGMIARALNSDVPLYYNTFCFEVSRNTTPEALKKAWQEIVDRTDILRTCFCETSDGIAQVVLKKSEVQWKSVHGSQHEPLGNSRTKPLEMMDFAIPPVSLEYISGQTNFLRLSLFHALYDGTSMPMILSDIETLLSGHQPAKRMQFTDAVPRILSLDTAAAKKFWVDHFEEAKTSLLEPKSQVKELKEQIISHTLEASKSDVERVARDLGCTTQALFQVACLQALVRVQEKQVVMGIITSGRSFTVDGIDTCIGPLFNSIPCHLPISKGATWKEYAQKAHTFNISSIPFHHTPLRQISKWVGQGSKPLFDVLFVFQPATPLAEDRALREIDSAAILDYPVALEIQQGTDGRYTISVSSSSAYLDESENSLLLKSIVRGITDLLKNPEQEVAVLREIEGDVFHSKSEENQVKRPATPQPANFVWTEAAVSIRRELAILTGVEESAITEKSSIYQVGLDSVEAIRLSSRLLKKNIHLKVSDIMREATIERMVVYLSSTKSQTSSSDVKKNTLQKFETSAQKALKLSNDSLKKVESILPTTPLQDIMIAESIGSDFALYFNHDVLELQRGINIKKLQAAWKAVIKKNSILRTTFEEAHDLELGTSTDYIQIVWKDLSLEWDVVETTSEHESGRVDELMASHKSRKAPLALGIVRSDKRVLMVLSISHALYDGRSIGLLLDDVAREYDKQSTVRPDYKPFLEKVLNQDSKSSLGFWKHLLSNAKPRTFPVVGNDGQVWKAEQSSKVSVAKFAQFCREQKISEPVLGQACLSLLLSDIFSQDDVVFGTVISGRETEESEQYMFPTMNTIPVRAVLHGNVSDVLNSMQKSYSRSLEHQFVPLRDIQKNVCEPGQRMFDALFVYQKNKGSEEGVKLWRSIGGASQIEYAIAVEIEVNGDDLTWRISASETAMASHEAEDTLDTLDAMLQKIIGNPLWGYQRFTRSQLGNNLRAKLQSEMTRSVDVEESPSESDNYQNLERQVIKAISAIAKAAEQDIKPSTSIFHLGIDSISAIRLASELRKHSIFIAVSEILRESTVRKICLFLDKKQHTPNSSQKPTKQPEISPVQFKKVVAAAGLKNADVEYVSPATSGQIFLIKAWESSEGRIFLPTFSFKSAEVLRSPRLKRALDRLVSANPILRTSFAADGDDIFQIVHRQASPSFRSTYFDSDSVLESSLQQINQEEQVREYDMSTPSIRVHLVSSRNESYVFVTLHHALYDAFTLPTLLSQLSDLYKNEEMVLPKSSKSVLAPSSSSPEAKDFWIRYFTNSESTPLPSKQDVGVTERVELYTERQVPSGSQIDAACRKHGISLHSLSIACFAQIISKVVQKDSPIFGIYLSNRHLSDASEGVQTMPTLNMVPLMVKGASKSPLIDLAKQVQEDLLKISTSDAATTNLMEIYQWTGIRIDSFVNFLKEDKLDGNSRDGGLFERFELSAGTPAARDFSIPGALRSKDTVIQTNLDLEMALRNGFVDVGLFAAKKYLDNIDLRKISEEIKEGLMHFE.

The interval 281 to 669 (TFKKLNETSN…DVHPLIKDVV (389 aa)) is adenylation 1. Residues 775 to 851 (EVFDELSTKI…GLRDHVSGKK (77 aa)) form the Carrier 1 domain. At S812 the chain carries O-(pantetheine 4'-phosphoryl)serine. The tract at residues 886-1297 (ANVLPCSPMQ…YCLLHMLQNQ (412 aa)) is condensation 1. The segment at 1363–1758 (TYRQFDDMGN…SADKDVAEIV (396 aa)) is adenylation 2. The 77-residue stretch at 1865–1941 (EELSETEKVI…SLAKALSSAN (77 aa)) folds into the Carrier 2 domain. The residue at position 1901 (S1901) is an O-(pantetheine 4'-phosphoryl)serine. The tract at residues 1981 to 2379 (IKPCTPLQEG…LLKNPEQEVA (399 aa)) is condensation 2. Residues 2412 to 2485 (TEAAVSIRRE…RMVVYLSSTK (74 aa)) enclose the Carrier 3 domain. O-(pantetheine 4'-phosphoryl)serine is present on S2446. A condensation 3 region spans residues 2520 to 2917 (ESILPTTPLQ…MLQKIIGNPL (398 aa)). A Carrier 4 domain is found at 2954–3030 (DNYQNLERQV…KICLFLDKKQ (77 aa)). An O-(pantetheine 4'-phosphoryl)serine modification is found at S2991. Positions 3084-3368 (SEGRIFLPTF…VQEDLLKIST (285 aa)) are condensation 4.

It belongs to the NRP synthetase family.

The protein operates within siderophore biosynthesis. Nonribosomal peptide synthetase; part of the gene cluster that mediates the biosynthesis of desferriferrichrome that chelates Fe(3+) to form ferrichrome. Fe(3+) is a key factor for induction of trap formation and the fungus uses the iron chelating desferriferrichrome to sequester Fe(3+) to inhibit trap formation and increase nematicidal activity. The biosynthesis of desferriferrichrome requires the action of the L-ornithine N(5)-oxygenase (LOO) Ao414 that hydroxylates L-ornithine at N(5), resulting in the formation of N(5)-hydroxyl-L-ornithine, which is subsequently N-acetylated to yield N(5)-acetyl-N(5)-hydroxy-L-ornithine (L-AHO). L-AHO harbors one hydroxamate moiety, which is the key core responsible for chelating iron. Then, L-AHO is further condensated with glycines to form desferriferrichrome through the NRPS protein Ao415. The protein is Nonribosomal peptide synthetase Ao415 of Arthrobotrys oligospora (strain ATCC 24927 / CBS 115.81 / DSM 1491) (Nematode-trapping fungus).